Reading from the N-terminus, the 175-residue chain is MMAKKRVATDNAADAKMELANRLFFRLYQCANMLHKTGTRAVEAEGLTTQQWAVLGALSRPTVANGMSVGDLARYLMVSRQNLTGLIGRMERDGHVAVVPDERDRRSRLVTMTKSGRHVWEVLAQPKIRAYYGEVLGDFSINDVTHTLHYLLKILDNMKRLDDGAAGETAATDLE.

In terms of domain architecture, HTH marR-type spans 20–156 (ANRLFFRLYQ…TLHYLLKILD (137 aa)).

Its function is as follows. Transcriptional activator of genes for the anaerobic degradation of benzoate. This Rhodopseudomonas palustris (strain ATCC BAA-98 / CGA009) protein is Transcriptional activatory protein BadR (badR).